The following is a 531-amino-acid chain: Histone-arginine methyltransferase CARMER (531 aa).

The SAM-dependent MTase PRMT-type domain maps to 141 to 450 (ASQYFQFYGY…QSYDVTIDLH (310 aa)). S-adenosyl-L-methionine-binding residues include Gln154, Arg163, Gly187, Glu209, Glu238, and Thr266. Arg501 is modified (asymmetric dimethylarginine; by autocatalysis).

The protein belongs to the class I-like SAM-binding methyltransferase superfamily. Protein arginine N-methyltransferase family. As to quaternary structure, homodimer. The dimethylated protein is the major form.

The protein localises to the cytoplasm. Its subcellular location is the nucleus. The catalysed reaction is L-arginyl-[protein] + 2 S-adenosyl-L-methionine = N(omega),N(omega)-dimethyl-L-arginyl-[protein] + 2 S-adenosyl-L-homocysteine + 2 H(+). Methylates (mono- and asymmetric dimethylation) the guanidino nitrogens of arginyl residues in proteins. May methylate histone H3 at 'Arg-17' and activate transcription via chromatin remodeling. This Drosophila ananassae (Fruit fly) protein is Histone-arginine methyltransferase CARMER (Art4).